Reading from the N-terminus, the 129-residue chain is Small ribosomal subunit protein uS12 (129 aa).

Asp-89 bears the 3-methylthioaspartic acid mark. The disordered stretch occupies residues 101–129 (SLDTSGVADRKQSRSKYGAKQPKAGAAKK). The segment covering 116-129 (KYGAKQPKAGAAKK) has biased composition (low complexity).

Belongs to the universal ribosomal protein uS12 family. In terms of assembly, part of the 30S ribosomal subunit. Contacts proteins S8 and S17. May interact with IF1 in the 30S initiation complex.

Its function is as follows. With S4 and S5 plays an important role in translational accuracy. Functionally, interacts with and stabilizes bases of the 16S rRNA that are involved in tRNA selection in the A site and with the mRNA backbone. Located at the interface of the 30S and 50S subunits, it traverses the body of the 30S subunit contacting proteins on the other side and probably holding the rRNA structure together. The combined cluster of proteins S8, S12 and S17 appears to hold together the shoulder and platform of the 30S subunit. The protein is Small ribosomal subunit protein uS12 of Chlorobaculum parvum (strain DSM 263 / NCIMB 8327) (Chlorobium vibrioforme subsp. thiosulfatophilum).